The chain runs to 132 residues: Small ribosomal subunit protein uS8 (132 aa).

It belongs to the universal ribosomal protein uS8 family. Part of the 30S ribosomal subunit. Contacts proteins S5 and S12.

Functionally, one of the primary rRNA binding proteins, it binds directly to 16S rRNA central domain where it helps coordinate assembly of the platform of the 30S subunit. The polypeptide is Small ribosomal subunit protein uS8 (Streptococcus equi subsp. equi (strain 4047)).